We begin with the raw amino-acid sequence, 79 residues long: Translational regulator CsrA (79 aa).

Belongs to the CsrA/RsmA family. In terms of assembly, homodimer; the beta-strands of each monomer intercalate to form a hydrophobic core, while the alpha-helices form wings that extend away from the core.

It is found in the cytoplasm. In terms of biological role, a translational regulator that binds mRNA to regulate translation initiation and/or mRNA stability. Usually binds in the 5'-UTR at or near the Shine-Dalgarno sequence preventing ribosome-binding, thus repressing translation. Its main target seems to be the major flagellin gene, while its function is anatagonized by FliW. In Geobacter sulfurreducens (strain ATCC 51573 / DSM 12127 / PCA), this protein is Translational regulator CsrA.